The chain runs to 262 residues: Diaminopimelate epimerase (262 aa).

Asn17, Gln45, and Asn63 together coordinate substrate. Cys72 functions as the Proton donor in the catalytic mechanism. Substrate contacts are provided by residues 73-74 (GN), Asn154, Asn187, and 205-206 (ER). The active-site Proton acceptor is the Cys214. 215-216 (GS) contributes to the substrate binding site.

The protein belongs to the diaminopimelate epimerase family. Homodimer.

The protein resides in the cytoplasm. The catalysed reaction is (2S,6S)-2,6-diaminopimelate = meso-2,6-diaminopimelate. Its pathway is amino-acid biosynthesis; L-lysine biosynthesis via DAP pathway; DL-2,6-diaminopimelate from LL-2,6-diaminopimelate: step 1/1. Functionally, catalyzes the stereoinversion of LL-2,6-diaminopimelate (L,L-DAP) to meso-diaminopimelate (meso-DAP), a precursor of L-lysine and an essential component of the bacterial peptidoglycan. The chain is Diaminopimelate epimerase from Wolbachia sp. subsp. Drosophila simulans (strain wRi).